A 369-amino-acid polypeptide reads, in one-letter code: Homoserine O-succinyltransferase (369 aa).

The segment at 1–21 is disordered; it reads MVRIVPSARRTRAPAKLDGRS. The AB hydrolase-1 domain occupies 86-350; that stretch reads VVFVAGGISA…PFGHDAFLKE (265 aa). An important for substrate specificity region spans residues 92-95; it reads GISA. S172 acts as the Nucleophile in catalysis. Residue R233 participates in substrate binding. Active-site residues include D314 and H344. D345 is a binding site for substrate.

This sequence belongs to the AB hydrolase superfamily. MetX family. Homodimer.

It localises to the cytoplasm. The enzyme catalyses L-homoserine + succinyl-CoA = O-succinyl-L-homoserine + CoA. It functions in the pathway amino-acid biosynthesis; L-methionine biosynthesis via de novo pathway; O-succinyl-L-homoserine from L-homoserine: step 1/1. Its function is as follows. Transfers a succinyl group from succinyl-CoA to L-homoserine, forming succinyl-L-homoserine. This chain is Homoserine O-succinyltransferase, found in Xanthomonas campestris pv. campestris (strain ATCC 33913 / DSM 3586 / NCPPB 528 / LMG 568 / P 25).